The following is a 284-amino-acid chain: Tropomyosin (284 aa).

The stretch at 1–284 forms a coiled coil; it reads MDGIKKKMIA…DQTFAELTGY (284 aa). Positions 111-131 are disordered; sequence TKLEEASKTAEESERGRKDLE.

Belongs to the tropomyosin family. Homodimer.

Its function is as follows. Tropomyosin, in association with the troponin complex, plays a central role in the calcium dependent regulation of muscle contraction. The protein is Tropomyosin of Schistosoma haematobium (Blood fluke).